Consider the following 90-residue polypeptide: Probable Fe(2+)-trafficking protein (90 aa).

The protein belongs to the Fe(2+)-trafficking protein family. As to quaternary structure, monomer.

Could be a mediator in iron transactions between iron acquisition and iron-requiring processes, such as synthesis and/or repair of Fe-S clusters in biosynthetic enzymes. This is Probable Fe(2+)-trafficking protein from Pectobacterium atrosepticum (strain SCRI 1043 / ATCC BAA-672) (Erwinia carotovora subsp. atroseptica).